Reading from the N-terminus, the 275-residue chain is MKWIKSTGSIGLSLLLFLSSFSHSLYAAPLRVISLSPSTTELAYAAGLGDNLIAASAYSDYPPQARKLEQVANWQGINLERIITLKPELILAWRGGNPQRPLEQLAAFGIKIFYSDPTTTEQIAQDLERLAEYSPHPEQAKKSATELRQRFANLQQQYATTTPKPAFLQFGTYPLFTTSGQTLQSEVLSICGGRNIFANSPVPWPQVSREQVLIRKPEIIVISGGQEQVKLIENFWHPQLRAKVITLHEDWFHRAGPRIILAAEQLCQQLNDNGS.

The first 27 residues, 1 to 27, serve as a signal peptide directing secretion; the sequence is MKWIKSTGSIGLSLLLFLSSFSHSLYA. Residues 31-275 enclose the Fe/B12 periplasmic-binding domain; that stretch reads RVISLSPSTT…LCQQLNDNGS (245 aa). A cyanocob(III)alamin-binding site is contributed by Tyr-58. A disulfide bridge connects residues Cys-191 and Cys-267.

Belongs to the BtuF family. The complex is composed of two ATP-binding proteins (BtuD), two transmembrane proteins (BtuC) and a solute-binding protein (BtuF).

It localises to the periplasm. In terms of biological role, part of the ABC transporter complex BtuCDF involved in vitamin B12 import. Binds vitamin B12 and delivers it to the periplasmic surface of BtuC. This Photorhabdus laumondii subsp. laumondii (strain DSM 15139 / CIP 105565 / TT01) (Photorhabdus luminescens subsp. laumondii) protein is Vitamin B12-binding protein.